Consider the following 253-residue polypeptide: Tryptophan synthase alpha chain (253 aa).

Catalysis depends on proton acceptor residues Glu46 and Asp57.

This sequence belongs to the TrpA family. As to quaternary structure, tetramer of two alpha and two beta chains.

It catalyses the reaction (1S,2R)-1-C-(indol-3-yl)glycerol 3-phosphate + L-serine = D-glyceraldehyde 3-phosphate + L-tryptophan + H2O. Its pathway is amino-acid biosynthesis; L-tryptophan biosynthesis; L-tryptophan from chorismate: step 5/5. In terms of biological role, the alpha subunit is responsible for the aldol cleavage of indoleglycerol phosphate to indole and glyceraldehyde 3-phosphate. The protein is Tryptophan synthase alpha chain of Dictyoglomus thermophilum (strain ATCC 35947 / DSM 3960 / H-6-12).